The primary structure comprises 329 residues: Ribonucleoside-diphosphate reductase subunit beta (329 aa).

D66, E97, and H101 together coordinate Fe cation. Residue Y105 is part of the active site. Fe cation is bound by residues E164, E198, and H201.

Belongs to the ribonucleoside diphosphate reductase small chain family. In terms of assembly, tetramer of two alpha and two beta subunits. The cofactor is Fe cation.

It catalyses the reaction a 2'-deoxyribonucleoside 5'-diphosphate + [thioredoxin]-disulfide + H2O = a ribonucleoside 5'-diphosphate + [thioredoxin]-dithiol. In terms of biological role, provides the precursors necessary for DNA synthesis. Catalyzes the biosynthesis of deoxyribonucleotides from the corresponding ribonucleotides. This Bacillus subtilis (strain 168) protein is Ribonucleoside-diphosphate reductase subunit beta (nrdF).